We begin with the raw amino-acid sequence, 715 residues long: Scinderin (715 aa).

Residues 1 to 363 (MAQGLYHEEF…DGFGKVYVTE (363 aa)) form an actin-severing region. The stretch at 27 to 77 (LELVPVPESAYGNFYVGDAYLVLHTTQASRGFTYRLHFWLGKECTQDESTA) is one Gelsolin-like 1 repeat. Tyr-102 is subject to Phosphotyrosine. Residues 112 to 119 (KGGLKYKA) and 138 to 146 (RLLHVKGRR) contribute to the a 1,2-diacyl-sn-glycero-3-phospho-(1D-myo-inositol-4,5-bisphosphate) site. 4 Gelsolin-like repeats span residues 148–188 (VRAT…YERL), 265–307 (LVAE…QERK), 398–451 (VQIW…DELT), and 523–564 (TRIM…EEEK). Residues 364 to 715 (KVAHVKQIPF…WFLGWDSSRW (352 aa)) are actin-binding, Ca-sensitive. A ca(2+)-dependent actin binding region spans residues 364–715 (KVAHVKQIPF…WFLGWDSSRW (352 aa)). Residues Asn-538, Asp-539, and Glu-562 each coordinate Ca(2+). Tyr-599 carries the phosphotyrosine modification. Residues 626–668 (FIIEEVPGEFTQDDLAEDDVMLLDAWEQIFIWIGKDANEVEKS) form a Gelsolin-like 6 repeat. Residues Asp-643, Asp-644, and Glu-666 each contribute to the Ca(2+) site.

The protein belongs to the villin/gelsolin family. The N-terminus is blocked. As to expression, in the adrenal gland, expressed in the medulla but, in the cortex, found only in diffuse parts.

It is found in the cytoplasm. The protein resides in the cytoskeleton. It localises to the cell projection. Its subcellular location is the podosome. In terms of biological role, ca(2+)-dependent actin filament-severing protein that has a regulatory function in exocytosis by affecting the organization of the microfilament network underneath the plasma membrane. In vitro, also has barbed end capping and nucleating activities in the presence of Ca(2+). Severing activity is inhibited by phosphatidylinositol 4,5-bis-phosphate (PIP2). Required for megakaryocyte differentiation, maturation, polyploidization and apoptosis with the release of platelet-like particles. Plays a role in osteoclastogenesis (OCG) and actin cytoskeletal organization in osteoclasts. Regulates chondrocyte proliferation and differentiation. Inhibits cell proliferation and tumorigenesis. Signaling is mediated by MAPK, p38 and JNK pathways. The chain is Scinderin from Bos taurus (Bovine).